We begin with the raw amino-acid sequence, 291 residues long: Formamidopyrimidine-DNA glycosylase (291 aa).

Pro-2 acts as the Schiff-base intermediate with DNA in catalysis. The active-site Proton donor is the Glu-3. Lys-58 serves as the catalytic Proton donor; for beta-elimination activity. 3 residues coordinate DNA: His-104, Arg-123, and Lys-166. Residues 257 to 291 (KVYDREGEPCPTCGGTVQRFVQNGRSTFWCPKCQK) form an FPG-type zinc finger. Arg-281 (proton donor; for delta-elimination activity) is an active-site residue.

It belongs to the FPG family. As to quaternary structure, monomer. Requires Zn(2+) as cofactor.

The catalysed reaction is Hydrolysis of DNA containing ring-opened 7-methylguanine residues, releasing 2,6-diamino-4-hydroxy-5-(N-methyl)formamidopyrimidine.. It carries out the reaction 2'-deoxyribonucleotide-(2'-deoxyribose 5'-phosphate)-2'-deoxyribonucleotide-DNA = a 3'-end 2'-deoxyribonucleotide-(2,3-dehydro-2,3-deoxyribose 5'-phosphate)-DNA + a 5'-end 5'-phospho-2'-deoxyribonucleoside-DNA + H(+). Its function is as follows. Involved in base excision repair of DNA damaged by oxidation or by mutagenic agents. Acts as a DNA glycosylase that recognizes and removes damaged bases. Has a preference for oxidized purines, such as 7,8-dihydro-8-oxoguanine (8-oxoG). Has AP (apurinic/apyrimidinic) lyase activity and introduces nicks in the DNA strand. Cleaves the DNA backbone by beta-delta elimination to generate a single-strand break at the site of the removed base with both 3'- and 5'-phosphates. The polypeptide is Formamidopyrimidine-DNA glycosylase (Rhodopseudomonas palustris (strain ATCC BAA-98 / CGA009)).